A 699-amino-acid chain; its full sequence is Integrator complex subunit 10 (699 aa).

Serine 220 and serine 370 each carry phosphoserine. A Glycyl lysine isopeptide (Lys-Gly) (interchain with G-Cter in SUMO2) cross-link involves residue lysine 453.

This sequence belongs to the Integrator subunit 10 family. As to quaternary structure, component of the Integrator complex, composed of core subunits INTS1, INTS2, INTS3, INTS4, INTS5, INTS6, INTS7, INTS8, INTS9/RC74, INTS10, INTS11/CPSF3L, INTS12, INTS13, INTS14 and INTS15. The core complex associates with protein phosphatase 2A subunits PPP2CA and PPP2R1A, to form the Integrator-PP2A (INTAC) complex. INTS10 is part of the tail subcomplex, composed of INTS10, INTS13, INTS14 and INTS15.

It localises to the nucleus. Functionally, component of the integrator complex, a multiprotein complex that terminates RNA polymerase II (Pol II) transcription in the promoter-proximal region of genes. The integrator complex provides a quality checkpoint during transcription elongation by driving premature transcription termination of transcripts that are unfavorably configured for transcriptional elongation: the complex terminates transcription by (1) catalyzing dephosphorylation of the C-terminal domain (CTD) of Pol II subunit POLR2A/RPB1 and SUPT5H/SPT5, (2) degrading the exiting nascent RNA transcript via endonuclease activity and (3) promoting the release of Pol II from bound DNA. The integrator complex is also involved in terminating the synthesis of non-coding Pol II transcripts, such as enhancer RNAs (eRNAs), small nuclear RNAs (snRNAs), telomerase RNAs and long non-coding RNAs (lncRNAs). Within the integrator complex, INTS10 is part of the integrator tail module that acts as a platform for the recruitment of transcription factors at promoters. May be not involved in the recruitment of cytoplasmic dynein to the nuclear envelope, probably as component of the integrator complex. The polypeptide is Integrator complex subunit 10 (INTS10) (Macaca fascicularis (Crab-eating macaque)).